A 114-amino-acid polypeptide reads, in one-letter code: UPF0339 protein PM0519 (114 aa).

2 tandem repeats follow at residues 11 to 59 (AKDG…NFEV) and 62 to 110 (AKND…IKDL).

It belongs to the UPF0339 family. Duplicated subfamily.

The polypeptide is UPF0339 protein PM0519 (Pasteurella multocida (strain Pm70)).